Reading from the N-terminus, the 753-residue chain is Translation initiation factor IF-2 (753 aa).

The interval Met-1–Ala-166 is disordered. Low complexity-rich tracts occupy residues Ser-19–Ala-43, Asn-71–Arg-81, and Thr-102–Arg-122. Positions Pro-133 to Leu-146 are enriched in basic and acidic residues. The span at Thr-153 to Arg-162 shows a compositional bias: low complexity. The tr-type G domain occupies Pro-249–Arg-418. The interval Gly-258 to Thr-265 is G1. Position 258–265 (Gly-258–Thr-265) interacts with GTP. The G2 stretch occupies residues Gly-283–His-287. The segment at Asp-304–Gly-307 is G3. Residues Asp-304–His-308 and Asn-358–Asp-361 contribute to the GTP site. Positions Asn-358–Asp-361 are G4. A G5 region spans residues Ser-394–Arg-396.

This sequence belongs to the TRAFAC class translation factor GTPase superfamily. Classic translation factor GTPase family. IF-2 subfamily.

Its subcellular location is the cytoplasm. One of the essential components for the initiation of protein synthesis. Protects formylmethionyl-tRNA from spontaneous hydrolysis and promotes its binding to the 30S ribosomal subunits. Also involved in the hydrolysis of GTP during the formation of the 70S ribosomal complex. The polypeptide is Translation initiation factor IF-2 (Chloroflexus aggregans (strain MD-66 / DSM 9485)).